Here is a 473-residue protein sequence, read N- to C-terminus: Adenosylhomocysteinase (473 aa).

Residues Thr-64, Asp-139, and Glu-199 each contribute to the substrate site. NAD(+) is bound at residue 200–202; it reads TTT. Positions 229 and 233 each coordinate substrate. NAD(+) contacts are provided by residues Asn-234, 263–268, Glu-286, Asn-321, 342–344, and Asn-387; these read GYGDVG and IGH.

Belongs to the adenosylhomocysteinase family. NAD(+) serves as cofactor.

The protein localises to the cytoplasm. It carries out the reaction S-adenosyl-L-homocysteine + H2O = L-homocysteine + adenosine. The protein operates within amino-acid biosynthesis; L-homocysteine biosynthesis; L-homocysteine from S-adenosyl-L-homocysteine: step 1/1. May play a key role in the regulation of the intracellular concentration of adenosylhomocysteine. The sequence is that of Adenosylhomocysteinase from Burkholderia mallei (strain SAVP1).